The following is a 352-amino-acid chain: Protein RecA (352 aa).

68-75 (GPESSGKT) serves as a coordination point for ATP.

This sequence belongs to the RecA family.

The protein resides in the cytoplasm. Functionally, can catalyze the hydrolysis of ATP in the presence of single-stranded DNA, the ATP-dependent uptake of single-stranded DNA by duplex DNA, and the ATP-dependent hybridization of homologous single-stranded DNAs. It interacts with LexA causing its activation and leading to its autocatalytic cleavage. The chain is Protein RecA from Clostridium perfringens (strain SM101 / Type A).